Here is a 397-residue protein sequence, read N- to C-terminus: Argininosuccinate synthase (397 aa).

An ATP-binding site is contributed by 8 to 16 (AYSGGLDTS). Positions 86 and 91 each coordinate L-citrulline. Gly-116 serves as a coordination point for ATP. L-aspartate is bound by residues Thr-118, Asn-122, and Asp-123. Asn-122 provides a ligand contact to L-citrulline. Residues Arg-126, Ser-175, Ser-184, Glu-260, and Tyr-272 each coordinate L-citrulline.

The protein belongs to the argininosuccinate synthase family. Type 1 subfamily. In terms of assembly, homotetramer.

It localises to the cytoplasm. It catalyses the reaction L-citrulline + L-aspartate + ATP = 2-(N(omega)-L-arginino)succinate + AMP + diphosphate + H(+). Its pathway is amino-acid biosynthesis; L-arginine biosynthesis; L-arginine from L-ornithine and carbamoyl phosphate: step 2/3. The sequence is that of Argininosuccinate synthase from Clostridium botulinum (strain Langeland / NCTC 10281 / Type F).